A 425-amino-acid chain; its full sequence is L-lysine N6-monooxygenase (425 aa).

Residue Ile-8–Pro-14 coordinates FAD.

This sequence belongs to the lysine N(6)-hydroxylase/L-ornithine N(5)-oxygenase family. FAD serves as cofactor.

It localises to the cytoplasm. The protein localises to the cell membrane. The catalysed reaction is L-lysine + NADPH + O2 = N(6)-hydroxy-L-lysine + NADP(+) + H2O. It participates in siderophore biosynthesis; aerobactin biosynthesis. Flavoprotein monooxygenase required for N-hydroxylation of lysine. Involved in the biosynthesis of the siderophore aerobactin which is a chelator that mediates the high-affinity iron transport systems induced by the organism under iron-stressed conditions. This is L-lysine N6-monooxygenase from Escherichia coli.